A 255-amino-acid chain; its full sequence is Sulfur carrier protein FdhD (255 aa).

Catalysis depends on C103, which acts as the Cysteine persulfide intermediate.

The protein belongs to the FdhD family.

The protein localises to the cytoplasm. Functionally, required for formate dehydrogenase (FDH) activity. Acts as a sulfur carrier protein that transfers sulfur from IscS to the molybdenum cofactor prior to its insertion into FDH. This is Sulfur carrier protein FdhD from Sulfurisphaera tokodaii (strain DSM 16993 / JCM 10545 / NBRC 100140 / 7) (Sulfolobus tokodaii).